The following is a 127-amino-acid chain: MATKLSQEELLEQFESLTLIELAEFVKAFEEKFDVTAAAAVAAAPAGPVAAAEAAEEQDEFDVILTGAGDKKIQVIKVVRELTSLGLKEAKDLVDGAPKPVLEKVAKEAAEKAAESLKGAGASVEVK.

It belongs to the bacterial ribosomal protein bL12 family. In terms of assembly, homodimer. Part of the ribosomal stalk of the 50S ribosomal subunit. Forms a multimeric L10(L12)X complex, where L10 forms an elongated spine to which 2 to 4 L12 dimers bind in a sequential fashion. Binds GTP-bound translation factors.

Forms part of the ribosomal stalk which helps the ribosome interact with GTP-bound translation factors. Is thus essential for accurate translation. The protein is Large ribosomal subunit protein bL12 of Streptomyces avermitilis (strain ATCC 31267 / DSM 46492 / JCM 5070 / NBRC 14893 / NCIMB 12804 / NRRL 8165 / MA-4680).